The following is a 468-amino-acid chain: Alpha-2A adrenergic receptor (468 aa).

Residues 1–48 lie on the Extracellular side of the membrane; sequence MFRQEQPLAEGSFAPMGSLQPDAGNASWNGTEAPGGGARATPYSLQVT. Residues Asn-25 and Asn-29 are each glycosylated (N-linked (GlcNAc...) asparagine). The helical transmembrane segment at 49–74 threads the bilayer; sequence LTLVCLAGLLMLFTVFGNVLVIIAVF. The Cytoplasmic portion of the chain corresponds to 75 to 85; sequence TSRALKAPQNL. The helical transmembrane segment at 86–111 threads the bilayer; that stretch reads FLVSLASADILVATLVIPFSLANEVM. The Extracellular segment spans residues 112–121; sequence GYWYFGKAWC. Cys-121 and Cys-203 are joined by a disulfide. A helical membrane pass occupies residues 122–144; that stretch reads EIYLALDVLFCTSSIVHLCAISL. Topologically, residues 145-164 are cytoplasmic; sequence DRYWSITQAIEYNLKRTPRR. Residues 165–188 traverse the membrane as a helical segment; the sequence is IKAIIVTVWVISAVISFPPLISFE. The Extracellular portion of the chain corresponds to 189 to 207; the sequence is KKRGRSGQPSAEPRCEIND. The chain crosses the membrane as a helical span at residues 208-232; that stretch reads QKWYVISSSIGSFFAPCLIMILVYV. Residues 233–392 are Cytoplasmic-facing; the sequence is RIYQIAKRRT…RQNREKRFTF (160 aa). Disordered regions lie at residues 242-279 and 291-381; these read TRVP…VGPV and NGAP…SRWR. Over residues 315 to 332 the composition is skewed to basic and acidic residues; sequence SSEHAERPPGSRRSERGP. Ser-348 is modified (phosphoserine). The span at 351–366 shows a compositional bias: low complexity; sequence RRGPGATGLGAPTAGP. Omega-N-methylarginine is present on Arg-370. The chain crosses the membrane as a helical span at residues 393 to 417; the sequence is VLAVVIGVFVVCWFPFFFTYTLTAI. Topologically, residues 418–427 are extracellular; the sequence is GCPVPPTLFK. Residues 428-448 form a helical membrane-spanning segment; the sequence is FFFWFGYCNSSLNPVIYTIFN. Over 449 to 468 the chain is Cytoplasmic; that stretch reads HDFRRAFKKILCRGDRKRIV. The S-palmitoyl cysteine moiety is linked to residue Cys-460.

The protein belongs to the G-protein coupled receptor 1 family. Adrenergic receptor subfamily. ADRA2A sub-subfamily. Component of the ADA2A-containing complex (ATAC), composed of KAT14, KAT2A, TADA2L, TADA3L, ZZ3, MBIP, WDR5, YEATS2, CCDC101 and DR1. Retina, brain and olfactory lobe.

It localises to the cell membrane. Functionally, alpha-2 adrenergic receptors mediate the catecholamine-induced inhibition of adenylate cyclase through the action of G proteins. Component of the ATAC complex, a complex with histone acetyltransferase activity on histones H3 and H4. This is Alpha-2A adrenergic receptor from Bos taurus (Bovine).